We begin with the raw amino-acid sequence, 533 residues long: Glucomannan 4-beta-mannosyltransferase 9 (533 aa).

The chain crosses the membrane as a helical span at residues Ile37 to Val57. The active site involves Asp136. The substrate site is built by Asp195 and Asp197. The active site involves Asp289. 4 helical membrane-spanning segments follow: residues Leu368–Val388, Val404–Phe426, Val483–Gly503, and Tyr510–Val530.

This sequence belongs to the glycosyltransferase 2 family. Plant cellulose synthase-like A subfamily. Expressed in cotyledons at the base of the hypocotyls, in root elongation zone, lateral root primordia, vascular system of young leaves, abscission zone of the pedicle,.

It localises to the golgi apparatus membrane. It carries out the reaction GDP-mannose + (glucomannan)n = GDP + (glucomannan)n+1.. Its function is as follows. Possesses glucomannan synthase and mannan synthase activities in vitro. Mannan synthase consists of a 4-beta-mannosyltransferase activity on mannan using GDP-mannose. The beta-1,4-mannan product is the backbone for galactomannan synthesis by galactomannan galactosyltransferase. Galactomannan is a noncellulosic polysaccharides of plant cell wall. Required for lateral root development. The chain is Glucomannan 4-beta-mannosyltransferase 9 from Arabidopsis thaliana (Mouse-ear cress).